Here is a 301-residue protein sequence, read N- to C-terminus: Formylmethanofuran--tetrahydromethanopterin formyltransferase (301 aa).

The protein belongs to the FTR family. Homotetramer.

It localises to the cytoplasm. It carries out the reaction N-formylmethanofuran + 5,6,7,8-tetrahydromethanopterin + H(+) = N(5)-formyl-5,6,7,8-tetrahydromethanopterin + methanofuran. It functions in the pathway one-carbon metabolism; methanogenesis from CO(2); 5,10-methenyl-5,6,7,8-tetrahydromethanopterin from CO(2): step 2/3. Its function is as follows. Catalyzes the reversible transfer of a formyl group from formylmethanofuran (formyl-MFR) to tetrahydromethanopterin (H(4)MPT) to produce 5-formyl tetrahydromethanopterin (5-formyl-H(4)MPT) and methanofuran (MFR). The protein is Formylmethanofuran--tetrahydromethanopterin formyltransferase of Methanocaldococcus jannaschii (strain ATCC 43067 / DSM 2661 / JAL-1 / JCM 10045 / NBRC 100440) (Methanococcus jannaschii).